The sequence spans 415 residues: Chorismate synthase (415 aa).

The disordered stretch occupies residues 43-72 (EDLDRRKPGQSMITTSRGEPDKVSIKSGLQ). Arginine 48 lines the NADP(+) pocket. Residues 125–127 (RSS), glycine 304, 319–323 (HAPVS), and arginine 346 contribute to the FMN site. The segment at 262 to 310 (TDYTEDWEFGESEATASENASGDEPRARGDPKPVGNDHGGIQGGITTGD) is disordered. Gly residues predominate over residues 298 to 307 (DHGGIQGGIT). Residues 379-393 (PDRLDDRPGEYDTDY) show a composition bias toward basic and acidic residues. Positions 379-415 (PDRLDDRPGEYDTDYHPSSPRNDPEDADTHATTVDED) are disordered.

The protein belongs to the chorismate synthase family. Requires FMNH2 as cofactor.

It carries out the reaction 5-O-(1-carboxyvinyl)-3-phosphoshikimate = chorismate + phosphate. It functions in the pathway metabolic intermediate biosynthesis; chorismate biosynthesis; chorismate from D-erythrose 4-phosphate and phosphoenolpyruvate: step 7/7. Functionally, catalyzes the anti-1,4-elimination of the C-3 phosphate and the C-6 proR hydrogen from 5-enolpyruvylshikimate-3-phosphate (EPSP) to yield chorismate, which is the branch point compound that serves as the starting substrate for the three terminal pathways of aromatic amino acid biosynthesis. This reaction introduces a second double bond into the aromatic ring system. This Halomicrobium mukohataei (strain ATCC 700874 / DSM 12286 / JCM 9738 / NCIMB 13541) (Haloarcula mukohataei) protein is Chorismate synthase.